The primary structure comprises 860 residues: Alanine--tRNA ligase (860 aa).

Residues histidine 553, histidine 557, cysteine 655, and histidine 659 each contribute to the Zn(2+) site.

This sequence belongs to the class-II aminoacyl-tRNA synthetase family. It depends on Zn(2+) as a cofactor.

It is found in the cytoplasm. It carries out the reaction tRNA(Ala) + L-alanine + ATP = L-alanyl-tRNA(Ala) + AMP + diphosphate. Functionally, catalyzes the attachment of alanine to tRNA(Ala) in a two-step reaction: alanine is first activated by ATP to form Ala-AMP and then transferred to the acceptor end of tRNA(Ala). Also edits incorrectly charged Ser-tRNA(Ala) and Gly-tRNA(Ala) via its editing domain. The sequence is that of Alanine--tRNA ligase from Legionella pneumophila (strain Corby).